Consider the following 870-residue polypeptide: DNA-directed RNA polymerase subunit Rpo1N (870 aa).

8 residues coordinate Zn(2+): Cys-60, Cys-63, Cys-70, His-73, Cys-100, Cys-103, Cys-146, and Cys-149. Asp-451, Asp-453, and Asp-455 together coordinate Mg(2+).

Belongs to the RNA polymerase beta' chain family. In terms of assembly, part of the RNA polymerase complex. Mg(2+) is required as a cofactor. It depends on Zn(2+) as a cofactor.

It localises to the cytoplasm. It carries out the reaction RNA(n) + a ribonucleoside 5'-triphosphate = RNA(n+1) + diphosphate. Functionally, DNA-dependent RNA polymerase (RNAP) catalyzes the transcription of DNA into RNA using the four ribonucleoside triphosphates as substrates. Forms the clamp head domain. The protein is DNA-directed RNA polymerase subunit Rpo1N of Methanothermobacter thermautotrophicus (strain ATCC 29096 / DSM 1053 / JCM 10044 / NBRC 100330 / Delta H) (Methanobacterium thermoautotrophicum).